The following is a 389-amino-acid chain: Ribosomal RNA large subunit methyltransferase M (389 aa).

The span at 1 to 13 (MIGNARMSQKYPT) shows a compositional bias: polar residues. Positions 1 to 24 (MIGNARMSQKYPTSSSRKRSPLSS) are disordered. Residues Ser214, 247-250 (APGG), Asp266, Asp286, and Asp302 each bind S-adenosyl-L-methionine. Lys331 functions as the Proton acceptor in the catalytic mechanism.

Belongs to the class I-like SAM-binding methyltransferase superfamily. RNA methyltransferase RlmE family. RlmM subfamily. As to quaternary structure, monomer.

The protein localises to the cytoplasm. It carries out the reaction cytidine(2498) in 23S rRNA + S-adenosyl-L-methionine = 2'-O-methylcytidine(2498) in 23S rRNA + S-adenosyl-L-homocysteine + H(+). In terms of biological role, catalyzes the 2'-O-methylation at nucleotide C2498 in 23S rRNA. This is Ribosomal RNA large subunit methyltransferase M from Hahella chejuensis (strain KCTC 2396).